Reading from the N-terminus, the 144-residue chain is Large ribosomal subunit protein uL13 (144 aa).

This sequence belongs to the universal ribosomal protein uL13 family. As to quaternary structure, part of the 50S ribosomal subunit.

Functionally, this protein is one of the early assembly proteins of the 50S ribosomal subunit, although it is not seen to bind rRNA by itself. It is important during the early stages of 50S assembly. This Legionella pneumophila (strain Paris) protein is Large ribosomal subunit protein uL13.